Here is a 392-residue protein sequence, read N- to C-terminus: Phospho-N-acetylmuramoyl-pentapeptide-transferase (392 aa).

The next 11 membrane-spanning stretches (helical) occupy residues 24–44 (YLTL…LIAG), 76–96 (TMGG…WFDL), 100–120 (FVWI…VDDW), 137–157 (YFWQ…SISE), 167–187 (FITW…GLLV), 193–213 (VSYP…IVGS), 225–245 (GLAI…AYVT), 262–282 (SGEL…FLWF), 289–309 (VFMG…IAVI), 314–334 (IVLA…MLQV), and 369–389 (QVVV…LTTL).

Belongs to the glycosyltransferase 4 family. MraY subfamily. The cofactor is Mg(2+).

It localises to the cell inner membrane. The catalysed reaction is UDP-N-acetyl-alpha-D-muramoyl-L-alanyl-gamma-D-glutamyl-meso-2,6-diaminopimeloyl-D-alanyl-D-alanine + di-trans,octa-cis-undecaprenyl phosphate = di-trans,octa-cis-undecaprenyl diphospho-N-acetyl-alpha-D-muramoyl-L-alanyl-D-glutamyl-meso-2,6-diaminopimeloyl-D-alanyl-D-alanine + UMP. It functions in the pathway cell wall biogenesis; peptidoglycan biosynthesis. Its function is as follows. Catalyzes the initial step of the lipid cycle reactions in the biosynthesis of the cell wall peptidoglycan: transfers peptidoglycan precursor phospho-MurNAc-pentapeptide from UDP-MurNAc-pentapeptide onto the lipid carrier undecaprenyl phosphate, yielding undecaprenyl-pyrophosphoryl-MurNAc-pentapeptide, known as lipid I. This Acidovorax ebreus (strain TPSY) (Diaphorobacter sp. (strain TPSY)) protein is Phospho-N-acetylmuramoyl-pentapeptide-transferase.